A 338-amino-acid chain; its full sequence is Solute carrier family 35 member G5 (338 aa).

The interval 1-21 is disordered; the sequence is MAGSHPYFNLPDSTHPSPPSA. Helical transmembrane passes span 37–57, 67–87, 105–125, 160–180, 190–210, 221–241, 250–270, 281–301, and 305–325; these read TNGL…VGPL, LPSL…ALPL, CFCA…VQVV, CGLL…LWTL, ALGY…LLVY, TVAF…LFVL, LLSW…FTCV, LVCA…YYVL, and VAPS…IITA. The EamA 1 domain maps to 49 to 174; sequence LPAGFVGPLS…SILGLIIIVG (126 aa). An EamA 2 domain is found at 272 to 325; that stretch reads YAVTKAHPALVCAVLHSEVVVALILQYYVLHETVAPSDIMGAGIVLGSIAIITA.

It belongs to the SLC35G solute transporter family.

The protein resides in the membrane. In Pan troglodytes (Chimpanzee), this protein is Solute carrier family 35 member G5 (SLC35G5).